Consider the following 200-residue polypeptide: Holliday junction branch migration complex subunit RuvA (200 aa).

The interval 1–65 (MYEYIKGTLT…ETEHVLYGFS (65 aa)) is domain I. The interval 66–144 (SRAERECFRL…TLMPLYLEEP (79 aa)) is domain II. The flexible linker stretch occupies residues 145-149 (VVPSS). The interval 150–200 (TANSSFKEGIGALMNLGFSRLAADRMMTEAVKELSEEASVAELLPIALRKS) is domain III.

It belongs to the RuvA family. As to quaternary structure, homotetramer. Forms an RuvA(8)-RuvB(12)-Holliday junction (HJ) complex. HJ DNA is sandwiched between 2 RuvA tetramers; dsDNA enters through RuvA and exits via RuvB. An RuvB hexamer assembles on each DNA strand where it exits the tetramer. Each RuvB hexamer is contacted by two RuvA subunits (via domain III) on 2 adjacent RuvB subunits; this complex drives branch migration. In the full resolvosome a probable DNA-RuvA(4)-RuvB(12)-RuvC(2) complex forms which resolves the HJ.

The protein resides in the cytoplasm. The RuvA-RuvB-RuvC complex processes Holliday junction (HJ) DNA during genetic recombination and DNA repair, while the RuvA-RuvB complex plays an important role in the rescue of blocked DNA replication forks via replication fork reversal (RFR). RuvA specifically binds to HJ cruciform DNA, conferring on it an open structure. The RuvB hexamer acts as an ATP-dependent pump, pulling dsDNA into and through the RuvAB complex. HJ branch migration allows RuvC to scan DNA until it finds its consensus sequence, where it cleaves and resolves the cruciform DNA. In Chlamydia trachomatis serovar L2 (strain ATCC VR-902B / DSM 19102 / 434/Bu), this protein is Holliday junction branch migration complex subunit RuvA.